The primary structure comprises 438 residues: UDP-glycosyltransferase 84B2 (438 aa).

Residues serine 260, glycine 314–glutamine 316, histidine 331–glutamate 339, and tryptophan 353–glutamine 356 each bind UDP-alpha-D-glucose.

This sequence belongs to the UDP-glycosyltransferase family.

The polypeptide is UDP-glycosyltransferase 84B2 (UGT84B2) (Arabidopsis thaliana (Mouse-ear cress)).